A 1824-amino-acid polypeptide reads, in one-letter code: Afadin (1824 aa).

The 95-residue stretch at 39–133 (FHGVMRFYFQ…GRFVLKNEND (95 aa)) folds into the Ras-associating 1 domain. Positions 128-194 (LKNENDAIPP…DRPFQGEDVE (67 aa)) are disordered. Residues 146 to 185 (EKQEKEGVIQNFKRTLSKKEKKEKKKREKEALRQASDKDD) are a coiled coil. The segment covering 160 to 172 (TLSKKEKKEKKKR) has biased composition (basic residues). The segment covering 173 to 189 (EKEALRQASDKDDRPFQ) has biased composition (basic and acidic residues). Phosphoserine occurs at positions 216, 246, and 256. A Ras-associating 2 domain is found at 246-348 (SGGTLRIYAD…LVFQLKRRPP (103 aa)). Positions 349 to 371 (DHIPKKTKKHLEGKTPKGKERAD) are enriched in basic and acidic residues. The tract at residues 349 to 378 (DHIPKKTKKHLEGKTPKGKERADGSGYGST) is disordered. A phosphoserine mark is found at Ser-391 and Ser-424. Residues 426-492 (TEVGTEKLDD…LQSGMKVQFG (67 aa)) enclose the FHA domain. Ser-512, Ser-557, Ser-562, Ser-589, and Ser-655 each carry phosphoserine. A disordered region spans residues 534-595 (FDLGGDIHSG…RQESRTQDAS (62 aa)). A compositionally biased stretch (basic and acidic residues) spans 580–591 (QQPDYRRQESRT). The Dilute domain maps to 668-908 (NKMVSMMEGV…IENVVTVAEN (241 aa)). In terms of domain architecture, PDZ spans 1007 to 1093 (IITVTLKKQN…VVTLEVAKQG (87 aa)). Ser-1083, Ser-1107, Ser-1126, Ser-1140, Ser-1143, Ser-1172, Ser-1173, Ser-1182, and Ser-1199 each carry phosphoserine. The segment at 1107 to 1223 (SPMMQRISDR…PRPEAYPIPT (117 aa)) is disordered. Over residues 1113 to 1128 (ISDRRGSGKPRPKSEG) the composition is skewed to basic and acidic residues. The span at 1132–1143 (YNNSTQNGSPES) shows a compositional bias: polar residues. Basic and acidic residues predominate over residues 1152–1172 (SEPKKLPGDDRLMKNRADHRS). Positions 1190 to 1210 (ASGTTAKITSVSTGNLCTEEQ) are enriched in polar residues. 2 positions are modified to phosphothreonine: Thr-1211 and Thr-1232. Disordered stretches follow at residues 1235-1473 (ASKS…LQRP), 1501-1528 (SKEE…EKQQ), and 1569-1824 (RLQE…LNTK). Ser-1238 is subject to Phosphoserine. 2 stretches are compositionally biased toward basic and acidic residues: residues 1252 to 1262 (YEEKPHMHTDS) and 1274 to 1302 (RSQE…KSDS). The residue at position 1275 (Ser-1275) is a Phosphoserine. The span at 1309 to 1318 (SSSLDSSTSS) shows a compositional bias: low complexity. The segment covering 1325-1337 (SSKSVTPASTLTK) has biased composition (polar residues). Residue Ser-1328 is modified to Phosphoserine. Thr-1330 is subject to Phosphothreonine. A compositionally biased stretch (low complexity) spans 1345 to 1356 (TPAAIPATPVAV). Residues 1364 to 1373 (LPPPPPPPPV) are compositionally biased toward pro residues. The segment covering 1407–1441 (AERRKREEHQRWYEKEKARLEEERERKRREQERKL) has biased composition (basic and acidic residues). The stretch at 1408–1448 (ERRKREEHQRWYEKEKARLEEERERKRREQERKLGQMRTQS) forms a coiled coil. 2 positions are modified to phosphoserine: Ser-1501 and Ser-1512. Basic and acidic residues predominate over residues 1515-1528 (PWKRDAKEKLEKQQ). The stretch at 1523–1667 (KLEKQQQMHI…SRLEAERRRQ (145 aa)) forms a coiled coil. The segment covering 1578–1589 (EDDEEEEDDDVD) has biased composition (acidic residues). Residues 1597–1677 (LEAERRARLQ…HDEAARRLLE (81 aa)) show a composition bias toward basic and acidic residues. Over residues 1694 to 1709 (PPSPSPAPGAPPPPPQ) the composition is skewed to pro residues. Residues Ser-1696, Ser-1721, Ser-1774, Ser-1779, and Ser-1799 each carry the phosphoserine modification. Positions 1762 to 1776 (DACRDAKEKRSKSQD) are enriched in basic and acidic residues. At Lys-1807 the chain carries N6-acetyllysine. Residues 1813-1824 (KLTELENELNTK) are compositionally biased toward basic and acidic residues.

Homodimer. Interacts with F-actin, nectin and NECTIN3. Essential for the association of nectin and E-cadherin. Isoform 1/s-afadin does not interact with F-actin. Interacts with ZO-1 and occludin, but probably in an indirect manner. Interacts with RIT1 and RIT2. Interacts with NRXN1 and BCR. Interacts with ADAM10; the interaction locks ADAM10 at adherens junctions following ADAM10 recruitment to adherens junctions by TSPAN33.

Its subcellular location is the cell junction. It localises to the adherens junction. Its function is as follows. Belongs to an adhesion system, probably together with the E-cadherin-catenin system, which plays a role in the organization of homotypic, interneuronal and heterotypic cell-cell adherens junctions (AJs). Nectin- and actin-filament-binding protein that connects nectin to the actin cytoskeleton. May play a key role in the organization of epithelial structures of the embryonic ectoderm. Essential for the organization of adherens junctions. In Homo sapiens (Human), this protein is Afadin.